Here is an 89-residue protein sequence, read N- to C-terminus: Small ribosomal subunit protein uS15 (89 aa).

A disordered region spans residues 1 to 24 (MSLNAEQKSEIVEQFRRSPSDTGS). The segment covering 7-19 (QKSEIVEQFRRSP) has biased composition (basic and acidic residues).

The protein belongs to the universal ribosomal protein uS15 family. In terms of assembly, part of the 30S ribosomal subunit. Forms a bridge to the 50S subunit in the 70S ribosome, contacting the 23S rRNA.

Its function is as follows. One of the primary rRNA binding proteins, it binds directly to 16S rRNA where it helps nucleate assembly of the platform of the 30S subunit by binding and bridging several RNA helices of the 16S rRNA. Forms an intersubunit bridge (bridge B4) with the 23S rRNA of the 50S subunit in the ribosome. The polypeptide is Small ribosomal subunit protein uS15 (Halorhodospira halophila (strain DSM 244 / SL1) (Ectothiorhodospira halophila (strain DSM 244 / SL1))).